The primary structure comprises 145 residues: Large ribosomal subunit protein uL15 (145 aa).

Residues 1-42 are disordered; the sequence is MELHTLKATPGSRKAKHRVGRGHAAGKGKQAGRGQSGQTKRS. Residues 13–26 are compositionally biased toward basic residues; sequence RKAKHRVGRGHAAG.

The protein belongs to the universal ribosomal protein uL15 family. In terms of assembly, part of the 50S ribosomal subunit.

Binds to the 23S rRNA. The chain is Large ribosomal subunit protein uL15 from Metamycoplasma arthritidis (strain 158L3-1) (Mycoplasma arthritidis).